A 309-amino-acid polypeptide reads, in one-letter code: Gamma-hemolysin component A (309 aa).

An N-terminal signal peptide occupies residues methionine 1 to alanine 29.

This sequence belongs to the aerolysin family. Toxicity requires sequential binding and synergistic association of a class S and a class F component which form heterooligomeric complexes. HlgA (class S) associates with HlgB (class F) thus forming an AB toxin in strains producing both gamma-hemolysins and leukocidins. HlgA and LukF-PV can also form a complex.

It is found in the secreted. Its function is as follows. Toxin that seems to act by forming pores in the membrane of the cell. Has a hemolytic and a leucotoxic activity. The sequence is that of Gamma-hemolysin component A (hlgA) from Staphylococcus aureus (strain COL).